A 31-amino-acid polypeptide reads, in one-letter code: Hemocyanin subunit 1 (31 aa).

The protein belongs to the tyrosinase family. Hemocyanin subfamily. Hemolymph.

The protein localises to the secreted. Its subcellular location is the extracellular space. Its function is as follows. Hemocyanins are copper-containing oxygen carriers occurring freely dissolved in the hemolymph of many mollusks and arthropods. In Homarus americanus (American lobster), this protein is Hemocyanin subunit 1.